Consider the following 507-residue polypeptide: Protein disulfide-isomerase (507 aa).

The signal sequence occupies residues 1–20 (MASMVSFCFLLLFLAFFASS). In terms of domain architecture, Thioredoxin 1 spans 21–144 (FNEIYAEESE…IVDYLKKQSG (124 aa)). Catalysis depends on nucleophile residues Cys-62 and Cys-65. A disulfide bond links Cys-62 and Cys-65. 2 N-linked (GlcNAc...) asparagine glycosylation sites follow: Asn-181 and Asn-278. Residues 365-485 (YRKSEPIPEH…FIEFIEKNRE (121 aa)) enclose the Thioredoxin 2 domain. Catalysis depends on nucleophile residues Cys-407 and Cys-410. An intrachain disulfide couples Cys-407 to Cys-410. The disordered stretch occupies residues 484–507 (REKSSKKESIVKDDQTDSETKAEL). The Prevents secretion from ER motif lies at 504–507 (KAEL).

The protein belongs to the protein disulfide isomerase family.

The protein resides in the endoplasmic reticulum lumen. It carries out the reaction Catalyzes the rearrangement of -S-S- bonds in proteins.. Its function is as follows. Participates in the folding of proteins containing disulfide bonds, may be involved in glycosylation, prolyl hydroxylation and triglyceride transfer. In Datisca glomerata (Durango root), this protein is Protein disulfide-isomerase (PDI).